Consider the following 1453-residue polypeptide: DNA-directed RNA polymerase IV subunit 1 (1453 aa).

Zn(2+) is bound by residues cysteine 56, cysteine 59, cysteine 67, histidine 70, cysteine 97, cysteine 100, and cysteine 121. Mg(2+) contacts are provided by aspartate 447, aspartate 449, and aspartate 451. The tract at residues 806-818 (PLESFVHSVTSRD) is bridging helix.

This sequence belongs to the RNA polymerase beta' chain family. As to quaternary structure, component of the RNA polymerase IV complex. Interacts with NRPD2, NRPD3, NRPD3B, NRPD4, NRPD5, NRPD5B, NRPD6A, NRPD7, NRPD7B, NRPD9A, NRPD9B, NRPD10, NRPD11, NRPD12, RDR2, RDM4, CLSY1, CLSY2, CLSY3, CLSY4 and SHH1. Mostly expressed in flowers, and, to a lower extent, in leaves.

The protein resides in the nucleus. The catalysed reaction is RNA(n) + a ribonucleoside 5'-triphosphate = RNA(n+1) + diphosphate. Its function is as follows. DNA-dependent RNA polymerase catalyzes the transcription of DNA into RNA using the four ribonucleoside triphosphates as substrates. Largest and catalytic component of RNA polymerase IV which mediates 24-nt short-interfering RNAs (siRNA) accumulation. Implicated in siRNA-directed heterochromatin formation through the action of DCL3 and AGO4, and subsequent DNA methylation-dependent silencing of targeted sequences. Essential component of a self-reinforcing loop coupling de novo DNA methylation to siRNA production. Required for intercellular but not intracellular RNA interference (RNAi) leading to systemic post-transcriptional gene silencing. Involved in the maintenance of post-transcriptional RNA silencing. The protein is DNA-directed RNA polymerase IV subunit 1 (NRPD1) of Arabidopsis thaliana (Mouse-ear cress).